The sequence spans 477 residues: Regulatory protein HrpB (477 aa).

The 103-residue stretch at 375–477 folds into the HTH araC/xylS-type domain; the sequence is RRAYRYIIEN…NEAPSETIWR (103 aa). DNA-binding regions (H-T-H motif) lie at residues 393–414 and 444–467; these read REVA…KSAV and IIDT…RKQF.

Positive regulation of hypersensitive response genes involved in plant pathogenicity and partly of its own synthesis in minimal medium. The polypeptide is Regulatory protein HrpB (hrpB) (Ralstonia nicotianae (strain ATCC BAA-1114 / GMI1000) (Ralstonia solanacearum)).